We begin with the raw amino-acid sequence, 43 residues long: Potassium channel toxin gamma-KTx 4.3 (43 aa).

Intrachain disulfides connect cysteine 5–cysteine 23, cysteine 11–cysteine 34, cysteine 20–cysteine 39, and cysteine 24–cysteine 41.

It belongs to the ergtoxin family. Gamma-KTx 4 subfamily. As to expression, expressed by the venom gland.

Its subcellular location is the secreted. Its function is as follows. Reversibly blocks Kv11/ERG potassium channels. In Centruroides exilicauda (Bark scorpion), this protein is Potassium channel toxin gamma-KTx 4.3.